Here is a 528-residue protein sequence, read N- to C-terminus: Phosphoenolpyruvate carboxykinase (ATP) (528 aa).

R54, Y190, and K196 together coordinate substrate. ATP is bound by residues K196, H215, and 231–239; that span reads GLSGTGKTT. K196 and H215 together coordinate Mn(2+). D252 is a binding site for Mn(2+). ATP contacts are provided by E280, R316, and T441. Residue R316 coordinates substrate.

The protein belongs to the phosphoenolpyruvate carboxykinase (ATP) family. Mn(2+) serves as cofactor.

It is found in the cytoplasm. It catalyses the reaction oxaloacetate + ATP = phosphoenolpyruvate + ADP + CO2. It participates in carbohydrate biosynthesis; gluconeogenesis. Involved in the gluconeogenesis. Catalyzes the conversion of oxaloacetate (OAA) to phosphoenolpyruvate (PEP) through direct phosphoryl transfer between the nucleoside triphosphate and OAA. This Sulfurimonas denitrificans (strain ATCC 33889 / DSM 1251) (Thiomicrospira denitrificans (strain ATCC 33889 / DSM 1251)) protein is Phosphoenolpyruvate carboxykinase (ATP).